Here is a 473-residue protein sequence, read N- to C-terminus: FAD-dependent oxidoreductase dpchF (473 aa).

Positions 1–21 are cleaved as a signal peptide; it reads MKLSFIASPVWALALAQFAAA. 5 N-linked (GlcNAc...) asparagine glycosylation sites follow: Asn-98, Asn-128, Asn-181, Asn-262, and Asn-330.

It belongs to the beta-cyclopiazonate dehydrogenase family. It depends on FAD as a cofactor.

It participates in secondary metabolite biosynthesis; terpenoid biosynthesis. FAD-dependent oxidoreductase; part of the gene cluster that mediates the biosynthesis of the diterpenoid pyrones higginsianins A and B. The first step of the pathway is the synthesis of the alpha-pyrone moiety by the polyketide synthase dpchA via condensation of one acetyl-CoA starter unit with 3 malonyl-CoA units and 2 methylations. The alpha-pyrone is then combined with geranylgeranyl pyrophosphate (GGPP) formed by the GGPP synthase dpchD through the action of the prenyltransferase dpchC to yield a linear alpha-pyrone diterpenoid. Subsequent steps in the diterpenoid pyrone biosynthetic pathway involve the decalin core formation, which is initiated by the epoxidation of the C10-C11 olefin by the FAD-dependent oxidoreductase dpchE, and is followed by a cyclization cascade catalyzed by the terpene cyclase dpchB. The short chain dehydrogenase/reductase dpchG then oxidizes the 8S hydroxy group to a ketone and the short chain dehydrogenase/reductase dpchH reduces the ketone to the 8R hydroxy group to yield higginsianin B. Finally, the FAD-dependent oxidoreductase dpchF converts higginsianin B into higginsianin A. The sequence is that of FAD-dependent oxidoreductase dpchF from Colletotrichum higginsianum (strain IMI 349063) (Crucifer anthracnose fungus).